Here is a 323-residue protein sequence, read N- to C-terminus: Trihelix transcription factor GT-3a (323 aa).

Residues M1–L20 show a composition bias toward basic residues. Residues M1–Q51 are disordered. The region spanning W52 to V108 is the Myb-like domain. Disordered regions lie at residues E147–Q176, K190–A220, and E269–Q297. The span at S164 to Q176 shows a compositional bias: acidic residues.

In terms of assembly, homodimer. Heterodimer with GT-3B. As to expression, predominantly expressed in roots and flower buds.

It localises to the nucleus. Functionally, probable transcription factor that binds specifically to the core DNA sequence 5'-GTTAC-3'. The polypeptide is Trihelix transcription factor GT-3a (GT-3A) (Arabidopsis thaliana (Mouse-ear cress)).